The following is a 1969-amino-acid chain: Myosin-3 (1969 aa).

A Myosin N-terminal SH3-like domain is found at 33–82 (DSKKNCWIPDPEDGFVAAEIQSTTGEQVTVVTVKGNQITVKKDQCQEMNP). Positions 86-791 (DKTEDMANLT…VLAKLEDLRD (706 aa)) constitute a Myosin motor domain. At Lys130 the chain carries N6,N6,N6-trimethyllysine. 179-186 (GESGAGKT) contacts ATP. 2 actin-binding regions span residues 667–689 (LNNL…IPNE) and 770–784 (KVGE…GVLA). The IQ domain maps to 794-823 (LSRIVTMFQSRIRSYLAKAEVRRRYEQQTG). A coiled-coil region spans residues 857–1969 (KEQEAMGELA…IRSSSNARFL (1113 aa)). Disordered stretches follow at residues 942-966 (MQER…TKKH), 1006-1029 (NKEK…EEDK), 1131-1213 (LEEE…GDSV), and 1234-1255 (KSKL…VRSR). Basic and acidic residues-rich tracts occupy residues 1137–1164 (AERN…ERLE) and 1176–1197 (ANKK…DSLN).

It belongs to the TRAFAC class myosin-kinesin ATPase superfamily. Myosin family. In terms of assembly, muscle myosin is a hexameric protein that consists of 2 heavy chain subunits (MHC), 2 alkali light chain subunits (MLC) and 2 regulatory light chain subunits (MLC-2). As to expression, expressed in body wall muscles, neighboring vulval muscle cells and the contractile sheath covering the hermaphrodite gonad (myoepithelial sheath cells).

It is found in the cytoplasm. The protein localises to the myofibril. It localises to the sarcomere. The protein resides in the a band. Functionally, essential for muscle contraction. Involved in ovulation likely by regulating the contraction of gonadal myoepithelial sheath cells. This Caenorhabditis elegans protein is Myosin-3 (myo-3).